The sequence spans 222 residues: Probable GTP-binding protein EngB (222 aa).

The EngB-type G domain maps to 25–199 (AGVEVAFAGR…SQLLQNWFDT (175 aa)). Residues 33–40 (GRSNAGKS), 60–64 (GRTQH), 78–81 (DLPG), 145–148 (TKAD), and 178–180 (FSS) contribute to the GTP site. Positions 40 and 62 each coordinate Mg(2+).

It belongs to the TRAFAC class TrmE-Era-EngA-EngB-Septin-like GTPase superfamily. EngB GTPase family. Requires Mg(2+) as cofactor.

Necessary for normal cell division and for the maintenance of normal septation. This chain is Probable GTP-binding protein EngB, found in Nitrosomonas europaea (strain ATCC 19718 / CIP 103999 / KCTC 2705 / NBRC 14298).